Consider the following 341-residue polypeptide: MSDQIIARVSQSLAKEQSLESLVRQLLEMLEMVTDMESTYLTKVDVEARLQHIMFARNSQKMYIPENFTVSWDYSLCKRAIDENCFFSDEVPDRWGDCIAARNLGITTFLSTPIHLPDGSFYGTLCAASSEKRQWSERAEQVLQLFAGLIAQYIQKEALVEQLREANAALIAQSYTDSLTGLPNRRAIFENLTTLFSLARHLNHKIMIAFIDLDNFKLINDRFGHNSGDLFLIQVGERLNTLQQNGEVIGRLGGDEFLVVSLNNENADISSLRERIQQQIRGEYHLGDVDLYYPGASLGIVEVDPETTDADSALHAADIAMYQEKKHKQKTPFVAHPALHS.

The GAF domain occupies 18 to 154 (SLESLVRQLL…LFAGLIAQYI (137 aa)). In terms of domain architecture, GGDEF spans 204–337 (HKIMIAFIDL…KQKTPFVAHP (134 aa)). Residue aspartate 212 participates in Mg(2+) binding. Substrate-binding residues include asparagine 220, histidine 225, and aspartate 229. Aspartate 255 is a binding site for Mg(2+). The active-site Proton acceptor is aspartate 255.

In terms of assembly, homodimer. Mg(2+) serves as cofactor.

The catalysed reaction is 2 GTP = 3',3'-c-di-GMP + 2 diphosphate. The protein operates within purine metabolism; 3',5'-cyclic di-GMP biosynthesis. Functionally, catalyzes the synthesis of cyclic-di-GMP (c-di-GMP) via the condensation of 2 GTP molecules. Cyclic-di-GMP is a second messenger which controls cell surface-associated traits in bacteria. The protein is Diguanylate cyclase DgcP of Escherichia coli (strain K12).